Reading from the N-terminus, the 235-residue chain is Large ribosomal subunit protein uL1 (235 aa).

Belongs to the universal ribosomal protein uL1 family. Part of the 50S ribosomal subunit.

In terms of biological role, binds directly to 23S rRNA. The L1 stalk is quite mobile in the ribosome, and is involved in E site tRNA release. Functionally, protein L1 is also a translational repressor protein, it controls the translation of the L11 operon by binding to its mRNA. The chain is Large ribosomal subunit protein uL1 from Methylobacterium nodulans (strain LMG 21967 / CNCM I-2342 / ORS 2060).